A 285-amino-acid chain; its full sequence is Putative alkaline ceramidase dcd3B (285 aa).

The next 3 membrane-spanning stretches (helical) occupy residues 34 to 54, 77 to 97, and 104 to 124; these read TFSS…MMSA, VLFS…YHAT, and LFDE…ILTI. A glycan (N-linked (GlcNAc...) asparagine) is linked at Asn-131. 4 helical membrane-spanning segments follow: residues 141–161, 166–186, 200–220, and 236–256; these read RFLP…ITII, IILQ…SYMY, PKKF…SWLT, and LHAV…QFFI.

It belongs to the alkaline ceramidase family.

The protein localises to the membrane. This is Putative alkaline ceramidase dcd3B (dcd3B) from Dictyostelium discoideum (Social amoeba).